We begin with the raw amino-acid sequence, 493 residues long: Protein nucleotidyltransferase YdiU (493 aa).

Positions 96, 98, 99, 119, 131, 132, 182, and 189 each coordinate ATP. Catalysis depends on Asp258, which acts as the Proton acceptor. Mg(2+) is bound by residues Asn259 and Asp268. Asp268 lines the ATP pocket. The interval 471–493 (EKYTEFKNPPAPKERVSQTFCGT) is disordered.

The protein belongs to the SELO family. Mg(2+) is required as a cofactor. Mn(2+) serves as cofactor.

It catalyses the reaction L-seryl-[protein] + ATP = 3-O-(5'-adenylyl)-L-seryl-[protein] + diphosphate. The enzyme catalyses L-threonyl-[protein] + ATP = 3-O-(5'-adenylyl)-L-threonyl-[protein] + diphosphate. It carries out the reaction L-tyrosyl-[protein] + ATP = O-(5'-adenylyl)-L-tyrosyl-[protein] + diphosphate. The catalysed reaction is L-histidyl-[protein] + UTP = N(tele)-(5'-uridylyl)-L-histidyl-[protein] + diphosphate. It catalyses the reaction L-seryl-[protein] + UTP = O-(5'-uridylyl)-L-seryl-[protein] + diphosphate. The enzyme catalyses L-tyrosyl-[protein] + UTP = O-(5'-uridylyl)-L-tyrosyl-[protein] + diphosphate. Functionally, nucleotidyltransferase involved in the post-translational modification of proteins. It can catalyze the addition of adenosine monophosphate (AMP) or uridine monophosphate (UMP) to a protein, resulting in modifications known as AMPylation and UMPylation. In Nitrosococcus oceani (strain ATCC 19707 / BCRC 17464 / JCM 30415 / NCIMB 11848 / C-107), this protein is Protein nucleotidyltransferase YdiU.